Here is a 303-residue protein sequence, read N- to C-terminus: 2-dehydropantoate 2-reductase (303 aa).

NADP(+) contacts are provided by residues G7–G12, R35, N103, A129, and R131. N103 lines the substrate pocket. K182 functions as the Proton donor in the catalytic mechanism. Substrate-binding residues include N186, N190, N200, and S250. Residue E262 coordinates NADP(+).

This sequence belongs to the ketopantoate reductase family.

It is found in the cytoplasm. The catalysed reaction is (R)-pantoate + NADP(+) = 2-dehydropantoate + NADPH + H(+). The protein operates within cofactor biosynthesis; (R)-pantothenate biosynthesis; (R)-pantoate from 3-methyl-2-oxobutanoate: step 2/2. Functionally, catalyzes the NADPH-dependent reduction of ketopantoate into pantoic acid. This Pseudomonas aeruginosa (strain ATCC 15692 / DSM 22644 / CIP 104116 / JCM 14847 / LMG 12228 / 1C / PRS 101 / PAO1) protein is 2-dehydropantoate 2-reductase (panE).